The primary structure comprises 268 residues: MPRSFLVKKHFNASKKPNYSELDTHTVIISPCLYEGYPVPVIPQPEVLRSGAYSPIAVWTTASPFHAPLPAGLSPLSGYPASLGRVSPPPPSDTSSKDHSGSESPISDEEERLQSKLSDPHAIEAEKFQCNLCNKTYSTFSGLGKHKQLHCDAQSRKSFSCKYCDKEYVSLGALKMHIRTHTLPCVCKICGKAFSRPWLLQGHIRTHTGEKPFSCSHCSRAFADRSNLRAHLQTHSDVKKYQCKSCSKTFSRMSLLHKHEESGCCAAH.

An SNAG domain region spans residues 1–20 (MPRSFLVKKHFNASKKPNYS). The tract at residues 80 to 117 (PASLGRVSPPPPSDTSSKDHSGSESPISDEEERLQSKL) is disordered. 4 consecutive C2H2-type zinc fingers follow at residues 128 to 150 (FQCN…KQLH), 159 to 181 (FSCK…IRTH), 185 to 207 (CVCK…IRTH), and 213 to 235 (FSCS…LQTH). The C2H2-type 5; atypical zinc-finger motif lies at 241 to 264 (YQCKSCSKTFSRMSLLHKHEESGC).

This sequence belongs to the snail C2H2-type zinc-finger protein family. Interacts (via SNAG domain) with LIMD1 (via LIM domains), WTIP (via LIM domains) and AJUBA (via LIM domains). Interacts (via zinc fingers) with KPNA2, KPNB1, and TNPO1. May interact (via zinc fingers) with IPO7. In terms of processing, phosphorylated by GSK3B. Once phosphorylated, it becomes a target for ubiquitination. Ubiquitinated by the SCF(FBXO11) complex; ubiquitination requires previous GSK3B-mediated SNAI2 phosphorylation.

The protein resides in the nucleus. It is found in the cytoplasm. Its function is as follows. Transcriptional repressor that modulates both activator-dependent and basal transcription. Involved in the generation and migration of neural crest cells. Plays a role in mediating RAF1-induced transcriptional repression of the TJ protein, occludin (OCLN) and subsequent oncogenic transformation of epithelial cells. Represses BRCA2 expression by binding to its E2-box-containing silencer and recruiting CTBP1 and HDAC1 in breast cells. In epidermal keratinocytes, binds to the E-box in ITGA3 promoter and represses its transcription. Involved in the regulation of ITGB1 and ITGB4 expression and cell adhesion and proliferation in epidermal keratinocytes. Binds to E-box2 domain of BSG and activates its expression during TGFB1-induced epithelial-mesenchymal transition (EMT) in hepatocytes. Represses E-Cadherin/CDH1 transcription via E-box elements. Involved in osteoblast maturation. Binds to RUNX2 and SOC9 promoters and may act as a positive and negative transcription regulator, respectively, in osteoblasts. Binds to CXCL12 promoter via E-box regions in mesenchymal stem cells and osteoblasts. Plays an essential role in TWIST1-induced EMT and its ability to promote invasion and metastasis. The polypeptide is Zinc finger protein SNAI2 (SNAI2) (Bos taurus (Bovine)).